A 146-amino-acid polypeptide reads, in one-letter code: Large ribosomal subunit protein uL15 (146 aa).

Over residues 1-13 (MKLHELKPAEGSR) the composition is skewed to basic and acidic residues. Residues 1 to 65 (MKLHELKPAE…PLYRRLPKRG (65 aa)) form a disordered region. Composition is skewed to gly residues over residues 21–31 (RGIGSGNGKTA) and 42–52 (SGGGVRPGFEG).

The protein belongs to the universal ribosomal protein uL15 family. As to quaternary structure, part of the 50S ribosomal subunit.

In terms of biological role, binds to the 23S rRNA. The sequence is that of Large ribosomal subunit protein uL15 from Halalkalibacterium halodurans (strain ATCC BAA-125 / DSM 18197 / FERM 7344 / JCM 9153 / C-125) (Bacillus halodurans).